We begin with the raw amino-acid sequence, 312 residues long: Ribosomal RNA small subunit methyltransferase H (312 aa).

Residues 32–34, aspartate 52, phenylalanine 79, aspartate 100, and glutamine 107 contribute to the S-adenosyl-L-methionine site; that span reads AGH.

Belongs to the methyltransferase superfamily. RsmH family.

Its subcellular location is the cytoplasm. The enzyme catalyses cytidine(1402) in 16S rRNA + S-adenosyl-L-methionine = N(4)-methylcytidine(1402) in 16S rRNA + S-adenosyl-L-homocysteine + H(+). In terms of biological role, specifically methylates the N4 position of cytidine in position 1402 (C1402) of 16S rRNA. This chain is Ribosomal RNA small subunit methyltransferase H, found in Listeria monocytogenes serotype 4b (strain CLIP80459).